Here is a 254-residue protein sequence, read N- to C-terminus: Low affinity immunoglobulin gamma Fc region receptor III-A (254 aa).

The N-terminal stretch at 1-20 is a signal peptide; sequence MWQLLLPTALLLLVSAGMRA. Residues 21–206 are Extracellular-facing; it reads EDLPKAVVFL…SSISSFFPPG (186 aa). Ig-like C2-type domains follow at residues 24–105 and 107–189; these read PKAV…LEVH and GWLL…VNIT. 2 disulfide bridges follow: C47–C89 and C128–C172. N-linked (GlcNAc...) asparagine glycosylation occurs at N187. A helical membrane pass occupies residues 207–229; that stretch reads YQVSFCLVMVLLFAVDTGLYFSV. The Cytoplasmic segment spans residues 230–254; sequence KKSVPSSTRDWEDHKFKWSKDPQDK.

As to quaternary structure, forms a heterooligomeric complex with ITAM-containing signaling subunits, either a homodimer of CD247, a homodimer of FCER1G or a heterodimer of CD247 and FCER1G, to form a functional receptor complex. Interacts (via transmembrane domain) with signaling subunits; this interaction is a prerequisite for receptor complex expression on the cell surface and intracellular signal transduction. Binds the Fc region of antigen-complexed IgG with a preference for IgG1 and IgG3 isotypes. Interacts with CD2; this interaction is involved in NK cell activation and cytotoxicity. Interacts with S100A4; this interaction inhibits PKC-dependent phosphorylation of FCGR3A. In terms of processing, glycosylated. Glycosylation plays an inhibitory role in the interaction with IgG1 and IgG2. Post-translationally, undergoes rapid ectodomain shedding upon NK cell stimulation. The soluble form is produced by a proteolytic cleavage mediated by ADAM17. Repeated stimulation causes receptor shedding, a mechanism that allows for increased NK cell motility and detachment from opsonized target cells while avoiding activation-induced NK cell apoptosis. In terms of tissue distribution, lymphocytes and monocytes.

The protein resides in the cell membrane. It localises to the secreted. Functionally, receptor for the invariable Fc fragment of immunoglobulin gamma (IgG). Optimally activated upon binding of clustered antigen-IgG complexes displayed on cell surfaces, triggers lysis of antibody-coated cells, a process known as antibody-dependent cellular cytotoxicity (ADCC). Does not bind free monomeric IgG, thus avoiding inappropriate effector cell activation in the absence of antigenic trigger. Mediates IgG effector functions on natural killer (NK) cells. Binds antigen-IgG complexes generated upon infection and triggers NK cell-dependent cytokine production and degranulation to limit viral load and propagation. Involved in the generation of memory-like adaptive NK cells capable to produce high amounts of IFNG and to efficiently eliminate virus-infected cells via ADCC. Regulates NK cell survival and proliferation, in particular by preventing NK cell progenitor apoptosis. Fc-binding subunit that associates with CD247 and/or FCER1G adapters to form functional signaling complexes. Following the engagement of antigen-IgG complexes, triggers phosphorylation of immunoreceptor tyrosine-based activation motif (ITAM)-containing adapters with subsequent activation of phosphatidylinositol 3-kinase signaling and sustained elevation of intracellular calcium that ultimately drive NK cell activation. The ITAM-dependent signaling coupled to receptor phosphorylation by PKC mediates robust intracellular calcium flux that leads to production of pro-inflammatory cytokines, whereas in the absence of receptor phosphorylation it mainly activates phosphatidylinositol 3-kinase signaling leading to cell degranulation. Costimulates NK cells and trigger lysis of target cells independently of IgG binding. Mediates the antitumor activities of therapeutic antibodies. Upon ligation on monocytes triggers TNFA-dependent ADCC of IgG-coated tumor cells. Mediates enhanced ADCC in response to afucosylated IgGs. This Macaca mulatta (Rhesus macaque) protein is Low affinity immunoglobulin gamma Fc region receptor III-A.